We begin with the raw amino-acid sequence, 33 residues long: Photosystem II reaction center protein Psb30 (33 aa).

A helical membrane pass occupies residues 5-25; that stretch reads IVAQLTVLALIVVSGPLVIAL.

It belongs to the Psb30/Ycf12 family. In terms of assembly, PSII is composed of 1 copy each of membrane proteins PsbA, PsbB, PsbC, PsbD, PsbE, PsbF, PsbH, PsbI, PsbJ, PsbK, PsbL, PsbM, PsbT, PsbX, PsbY, PsbZ, Psb30/Ycf12, peripheral proteins of the oxygen-evolving complex and a large number of cofactors. It forms dimeric complexes.

Its subcellular location is the plastid. It is found in the chloroplast thylakoid membrane. A core subunit of photosystem II (PSII), probably helps stabilize the reaction center. This is Photosystem II reaction center protein Psb30 from Angiopteris evecta (Mule's foot fern).